A 134-amino-acid chain; its full sequence is DNA-binding protein StpA (134 aa).

The interval 73–94 is disordered; the sequence is EELLGNSSAAAPRAGKKRQPRP. A DNA-binding region spans residues 112 to 117; sequence QGRTPK.

Belongs to the histone-like protein H-NS family. Forms homodimers, can interact with H-NS. May interact with Hha and/or Cnu.

The protein localises to the cytoplasm. It is found in the nucleoid. In terms of biological role, a DNA-binding protein that acts in a fashion similar to H-NS, repressing gene transcription. A subset of H-NS/StpA-regulated genes require auxillary proteins for repression; these auxillary proteins (Hha and other similar proteins) may also modulate oligomerization of the H-NS/StpA complex. This Escherichia coli O157:H7 protein is DNA-binding protein StpA (stpA).